Here is a 508-residue protein sequence, read N- to C-terminus: Maturase K (508 aa).

It belongs to the intron maturase 2 family. MatK subfamily.

The protein resides in the plastid. It localises to the chloroplast. In terms of biological role, usually encoded in the trnK tRNA gene intron. Probably assists in splicing its own and other chloroplast group II introns. This chain is Maturase K, found in Abies bracteata (Bristle-cone fir).